Reading from the N-terminus, the 149-residue chain is Stathmin (149 aa).

Alanine 2 is subject to N-acetylalanine. Serine 4 is modified (phosphoserine). Positions 4–145 (SDIQVKELEK…NKESKDPADE (142 aa)) constitute an SLD domain. Lysine 9 bears the N6-acetyllysine mark. Serine 16 carries the post-translational modification Phosphoserine; by PKA. Serine 25 bears the Phosphoserine; by CDK1, MAPK1 and MAPK3 mark. The tract at residues 27 to 46 (RSKESVPDFPLSPPKKKDLS) is disordered. Lysine 29 is modified (N6-methyllysine). Serine 31 bears the Phosphoserine mark. Serine 38 bears the Phosphoserine; by CDK1, MAPK1 and MAPK3 mark. A coiled-coil region spans residues 41–140 (KKKDLSLEEI…EEVRKNKESK (100 aa)). Serine 63 carries the phosphoserine; by PKA modification. Lysine 100 and lysine 119 each carry N6-acetyllysine. A compositionally biased stretch (basic and acidic residues) spans 104-143 (KMEANKENREAQMAAKLERLREKDKHVEEVRKNKESKDPA). The interval 104 to 149 (KMEANKENREAQMAAKLERLREKDKHVEEVRKNKESKDPADETEAD) is disordered.

The protein belongs to the stathmin family. In terms of assembly, binds to two alpha/beta-tubulin heterodimers. Interacts with KIST. Many different phosphorylated forms are observed depending on specific combinations among the sites which can be phosphorylated. MAPK is responsible for the phosphorylation of stathmin in response to NGF. Phosphorylation at Ser-16 seems to be required for neuron polarization. As to expression, highly expressed in the lateral nucleus of the amygdala.

Its subcellular location is the cytoplasm. It localises to the cytoskeleton. Functionally, involved in the regulation of the microtubule (MT) filament system by destabilizing microtubules. Prevents assembly and promotes disassembly of microtubules. Phosphorylation at Ser-16 may be required for axon formation during neurogenesis. Involved in the control of the learned and innate fear. This is Stathmin (Stmn1) from Mus musculus (Mouse).